Reading from the N-terminus, the 362-residue chain is Atypical chemokine receptor 3 (362 aa).

Over 1-47 the chain is Extracellular; the sequence is MDVHLFDYVEPGNYSDINWPCNSSDCIVVDTVQCPAMPNKNVLLYTL. Asparagine 13 and asparagine 22 each carry an N-linked (GlcNAc...) asparagine glycan. Residues 48-68 form a helical membrane-spanning segment; the sequence is SFIYIFIFVIGMIANSVVVWV. Over 69 to 81 the chain is Cytoplasmic; the sequence is NIQAKTTGYDTHC. Residues 82–102 traverse the membrane as a helical segment; the sequence is YILNLAIADLWVVITIPVWVV. Over 103–118 the chain is Extracellular; it reads SLVQHNQWPMGELTCK. Cysteine 117 and cysteine 196 are disulfide-bonded. A helical transmembrane segment spans residues 119 to 139; that stretch reads ITHLIFSINLFGSIFFLACMS. At 140-162 the chain is on the cytoplasmic side; that stretch reads VDRYLSITYFTSTSSYKKKMVRR. The chain crosses the membrane as a helical span at residues 163–183; it reads VVCVLVWLLAFFVSLPDTYYL. The Extracellular portion of the chain corresponds to 184 to 213; that stretch reads KTVTSASNNETYCRSFYPEHSIKEWLIGME. The chain crosses the membrane as a helical span at residues 214 to 234; that stretch reads LVSVILGFAVPFTIIAIFYFL. Topologically, residues 235-252 are cytoplasmic; the sequence is LARAMSASGDQEKHSSRK. Residues 253–273 form a helical membrane-spanning segment; sequence IIFSYVVVFLVCWLPYHFVVL. The Extracellular portion of the chain corresponds to 274-296; it reads LDIFSILHYIPFTCQLENVLFTA. The chain crosses the membrane as a helical span at residues 297–319; it reads LHVTQCLSLVHCCVNPVLYSFIN. Over 320-362 the chain is Cytoplasmic; it reads RNYRYELMKAFIFKYSAKTGLTKLIDASRVSETEYSALEQNTK. The tract at residues 324–362 is C-terminal cytoplasmic tail; sequence YELMKAFIFKYSAKTGLTKLIDASRVSETEYSALEQNTK. Residues serine 347, serine 350, and serine 355 each carry the phosphoserine modification.

It belongs to the G-protein coupled receptor 1 family. Atypical chemokine receptor subfamily. In terms of assembly, homodimer. Can form heterodimers with CXCR4; heterodimerization may regulate CXCR4 signaling activity. Interacts with ARRB1 and ARRB2. In terms of processing, the Ser/Thr residues in the C-terminal cytoplasmic tail may be phosphorylated. Ubiquitinated at the Lys residues in its C-terminal cytoplasmic tail and is essential for correct trafficking from and to the cell membrane. Deubiquitinated by CXCL12-stimulation in a reversible manner. As to expression, expressed in vascular smooth muscle cells (at protein level). In brain, expressed in blood vessels, pyramidal cells in hippocampal subfield CA3, mature dentate gyrus granule cells, ventricle walls, olfactory bulb, accumbens shell, supraoptic, lateroanterior and ventromedial hypothalamic nuclei, medial region of thalamus, and motor nuclei, central gray and raphe magnus nucleus of brain stem. Detected in primary neurons, GABAergic neurons, astrocytes, cerebral cortex, ventral striatum and choroid plexus. Not detected in mesencephalon.

The protein resides in the cell membrane. The protein localises to the early endosome. Its subcellular location is the recycling endosome. In terms of biological role, atypical chemokine receptor that controls chemokine levels and localization via high-affinity chemokine binding that is uncoupled from classic ligand-driven signal transduction cascades, resulting instead in chemokine sequestration, degradation, or transcytosis. Also known as interceptor (internalizing receptor) or chemokine-scavenging receptor or chemokine decoy receptor. Acts as a receptor for chemokines CXCL11 and CXCL12/SDF1. Chemokine binding does not activate G-protein-mediated signal transduction but instead induces beta-arrestin recruitment, leading to ligand internalization and activation of MAPK signaling pathway. Required for regulation of CXCR4 protein levels in migrating interneurons, thereby adapting their chemokine responsiveness. In glioma cells, transduces signals via MEK/ERK pathway, mediating resistance to apoptosis. Promotes cell growth and survival. Not involved in cell migration, adhesion or proliferation of normal hematopoietic progenitors but activated by CXCL11 in malignant hemapoietic cells, leading to phosphorylation of ERK1/2 (MAPK3/MAPK1) and enhanced cell adhesion and migration. Plays a regulatory role in CXCR4-mediated activation of cell surface integrins by CXCL12. Required for heart valve development. Atypical chemokine receptor that controls chemokine levels and localization via high-affinity chemokine binding that is uncoupled from classic ligand-driven signal transduction cascades, resulting instead in chemokine sequestration, degradation, or transcytosis. Also known as interceptor (internalizing receptor) or chemokine-scavenging receptor or chemokine decoy receptor. Acts as a receptor for chemokines CXCL11 and CXCL12/SDF1. Chemokine binding does not activate G-protein-mediated signal transduction but instead induces beta-arrestin recruitment, leading to ligand internalization and activation of MAPK signaling pathway. Required for regulation of CXCR4 protein levels in migrating interneurons, thereby adapting their chemokine responsiveness. In glioma cells, transduces signals via MEK/ERK pathway, mediating resistance to apoptosis. Promotes cell growth and survival. Not involved in cell migration, adhesion or proliferation of normal hematopoietic progenitors but activated by CXCL11 in malignant hemapoietic cells, leading to phosphorylation of ERK1/2 (MAPK3/MAPK1) and enhanced cell adhesion and migration. Plays a regulatory role in CXCR4-mediated activation of cell surface integrins by CXCL12. Required for heart valve development. Regulates axon guidance in the oculomotor system through the regulation of CXCL12 levels. This chain is Atypical chemokine receptor 3, found in Rattus norvegicus (Rat).